An 826-amino-acid polypeptide reads, in one-letter code: Outer membrane usher protein YehB (826 aa).

An N-terminal signal peptide occupies residues methionine 1–alanine 22. A disulfide bond links cysteine 809 and cysteine 825.

This sequence belongs to the fimbrial export usher family.

Its subcellular location is the cell outer membrane. Its function is as follows. Part of the yehABCD fimbrial operon. Could contribute to adhesion to various surfaces in specific environmental niches. Probably involved in the export and assembly of fimbrial subunits across the outer membrane. The polypeptide is Outer membrane usher protein YehB (yehB) (Escherichia coli (strain K12)).